We begin with the raw amino-acid sequence, 130 residues long: Ribosome-binding factor A (130 aa).

This sequence belongs to the RbfA family. In terms of assembly, monomer. Binds 30S ribosomal subunits, but not 50S ribosomal subunits or 70S ribosomes.

The protein localises to the cytoplasm. Its function is as follows. One of several proteins that assist in the late maturation steps of the functional core of the 30S ribosomal subunit. Associates with free 30S ribosomal subunits (but not with 30S subunits that are part of 70S ribosomes or polysomes). Required for efficient processing of 16S rRNA. May interact with the 5'-terminal helix region of 16S rRNA. The sequence is that of Ribosome-binding factor A from Prochlorococcus marinus (strain MIT 9301).